A 1026-amino-acid chain; its full sequence is Exportin-T (1026 aa).

Belongs to the exportin family.

The protein localises to the nucleus. It localises to the cytoplasm. In terms of biological role, tRNA nucleus export receptor which facilitates tRNA translocation across the nuclear pore complex. Involved in pre-tRNA splicing, probably by affecting the interaction of pre-tRNA with splicing endonuclease. The chain is Exportin-T (los1) from Aspergillus oryzae (strain ATCC 42149 / RIB 40) (Yellow koji mold).